The primary structure comprises 432 residues: Ribosomal protein uS12 methylthiotransferase RimO (432 aa).

Residues 1–112 enclose the MTTase N-terminal domain; sequence MKIGVVSLGC…ILNYLGLKEK (112 aa). Residues C10, C46, C75, C134, C138, and C141 each coordinate [4Fe-4S] cluster. The Radical SAM core domain maps to 120–350; it reads STPRSYAYLK…MAIQRGITRK (231 aa). Positions 353 to 422 constitute a TRAM domain; the sequence is EEFLGKEIEV…DYDLAGRDTE (70 aa).

It belongs to the methylthiotransferase family. RimO subfamily. Requires [4Fe-4S] cluster as cofactor.

It localises to the cytoplasm. The catalysed reaction is L-aspartate(89)-[ribosomal protein uS12]-hydrogen + (sulfur carrier)-SH + AH2 + 2 S-adenosyl-L-methionine = 3-methylsulfanyl-L-aspartate(89)-[ribosomal protein uS12]-hydrogen + (sulfur carrier)-H + 5'-deoxyadenosine + L-methionine + A + S-adenosyl-L-homocysteine + 2 H(+). In terms of biological role, catalyzes the methylthiolation of an aspartic acid residue of ribosomal protein uS12. The sequence is that of Ribosomal protein uS12 methylthiotransferase RimO from Aquifex aeolicus (strain VF5).